We begin with the raw amino-acid sequence, 505 residues long: Probable cytochrome P450 28c1 (505 aa).

Residue Cys444 participates in heme binding.

It belongs to the cytochrome P450 family. The cofactor is heme.

The protein resides in the endoplasmic reticulum membrane. The protein localises to the microsome membrane. Its function is as follows. May be involved in the metabolism of insect hormones and in the breakdown of synthetic insecticides. This Drosophila melanogaster (Fruit fly) protein is Probable cytochrome P450 28c1 (Cyp28c1).